The sequence spans 180 residues: NAD(P)H-quinone oxidoreductase subunit I, chloroplastic (180 aa).

4Fe-4S ferredoxin-type domains lie at 55–84 and 95–124; these read GRIH…VHWR and LNYS…MTEE. The [4Fe-4S] cluster site is built by Cys-64, Cys-67, Cys-70, Cys-74, Cys-104, Cys-107, Cys-110, and Cys-114.

It belongs to the complex I 23 kDa subunit family. NDH is composed of at least 16 different subunits, 5 of which are encoded in the nucleus. Requires [4Fe-4S] cluster as cofactor.

The protein resides in the plastid. It is found in the chloroplast thylakoid membrane. It catalyses the reaction a plastoquinone + NADH + (n+1) H(+)(in) = a plastoquinol + NAD(+) + n H(+)(out). It carries out the reaction a plastoquinone + NADPH + (n+1) H(+)(in) = a plastoquinol + NADP(+) + n H(+)(out). Its function is as follows. NDH shuttles electrons from NAD(P)H:plastoquinone, via FMN and iron-sulfur (Fe-S) centers, to quinones in the photosynthetic chain and possibly in a chloroplast respiratory chain. The immediate electron acceptor for the enzyme in this species is believed to be plastoquinone. Couples the redox reaction to proton translocation, and thus conserves the redox energy in a proton gradient. The polypeptide is NAD(P)H-quinone oxidoreductase subunit I, chloroplastic (Calycanthus floridus var. glaucus (Eastern sweetshrub)).